Consider the following 170-residue polypeptide: Photosystem I assembly protein Ycf3 (170 aa).

TPR repeat units lie at residues 35-68 (AFTY…EIDP), 72-105 (SYIL…NPFL), and 120-153 (GEQA…TPGN).

It belongs to the Ycf3 family.

The protein localises to the plastid. The protein resides in the chloroplast thylakoid membrane. Essential for the assembly of the photosystem I (PSI) complex. May act as a chaperone-like factor to guide the assembly of the PSI subunits. The chain is Photosystem I assembly protein Ycf3 from Oryza nivara (Indian wild rice).